A 417-amino-acid polypeptide reads, in one-letter code: NADH-quinone oxidoreductase subunit D (417 aa).

It belongs to the complex I 49 kDa subunit family. NDH-1 is composed of 14 different subunits. Subunits NuoB, C, D, E, F, and G constitute the peripheral sector of the complex.

The protein localises to the cell inner membrane. It carries out the reaction a quinone + NADH + 5 H(+)(in) = a quinol + NAD(+) + 4 H(+)(out). In terms of biological role, NDH-1 shuttles electrons from NADH, via FMN and iron-sulfur (Fe-S) centers, to quinones in the respiratory chain. The immediate electron acceptor for the enzyme in this species is believed to be ubiquinone. Couples the redox reaction to proton translocation (for every two electrons transferred, four hydrogen ions are translocated across the cytoplasmic membrane), and thus conserves the redox energy in a proton gradient. This is NADH-quinone oxidoreductase subunit D from Legionella pneumophila (strain Corby).